The primary structure comprises 399 residues: Paraneoplastic antigen-like protein 6A (399 aa).

The protein belongs to the PNMA family. As to expression, expressed in the brain.

This is Paraneoplastic antigen-like protein 6A from Homo sapiens (Human).